The following is a 230-amino-acid chain: Alpha-S1-casein (230 aa).

The first 15 residues, 1–15 (MKLLILTCLVAVALA), serve as a signal peptide directing secretion. Phosphoserine occurs at positions 33, 83, 85, 86, 87, and 88. The segment covering 60 to 83 (DELKDTRNEPTEDHIMEDTERKES) has biased composition (basic and acidic residues). Disordered regions lie at residues 60-103 (DELK…DILK) and 211-230 (TPEG…PQWW). Positions 84–96 (GSSSSEEVVSSTT) are enriched in low complexity.

It belongs to the alpha-casein family. Mammary gland specific. Secreted in milk.

The protein resides in the secreted. Its function is as follows. Important role in the capacity of milk to transport calcium phosphate. This is Alpha-S1-casein (CSN1S1) from Camelus dromedarius (Dromedary).